Reading from the N-terminus, the 407-residue chain is uncharacterized protein (407 aa).

Coiled-coil stretches lie at residues 96–130 (TDSIEYEDEKLNELEKTRKEHTDKVKLMQQQFKNE) and 287–345 (MKCY…AKTS). Positions 302–317 (EKRKDNLQKQNEEAAK) are enriched in basic and acidic residues. Residues 302 to 394 (EKRKDNLQKQ…NMDPAINESD (93 aa)) are disordered. The segment covering 318-331 (ITKRKNRQEKRREK) has biased composition (basic residues). Over residues 344 to 370 (TSVSSIPDTSSTTTSTNSTPTNTKSNS) the composition is skewed to low complexity.

This is an uncharacterized protein from Acanthamoeba polyphaga (Amoeba).